Here is a 1433-residue protein sequence, read N- to C-terminus: Probable serine/threonine-protein kinase DDB_G0277989 (1433 aa).

Residues 1 to 4 (MNEI) and Lys-41 each bind ATP. One can recognise a Protein kinase 1 domain in the interval 1–272 (MNEIIVGEYK…EFDDFTHPLS (272 aa)). Asp-151 (proton acceptor) is an active-site residue. Low complexity-rich tracts occupy residues 332–362 (NNNNNNNNNNNNNNNNNNNNNNNNNNNNNNN) and 533–550 (TATTTPTPTATTPTTTTA). Disordered regions lie at residues 332–366 (NNNNNNNNNNNNNNNNNNNNNNNNNNNNNNNSDGP) and 521–550 (PSSETTPRPPTPTATTTPTPTATTPTTTTA). In terms of domain architecture, Protein kinase 2 spans 1177-1433 (IYDKRYYIQK…QPHVCKSFKK (257 aa)).

Belongs to the protein kinase superfamily. Ser/Thr protein kinase family.

It catalyses the reaction L-seryl-[protein] + ATP = O-phospho-L-seryl-[protein] + ADP + H(+). The catalysed reaction is L-threonyl-[protein] + ATP = O-phospho-L-threonyl-[protein] + ADP + H(+). The chain is Probable serine/threonine-protein kinase DDB_G0277989 from Dictyostelium discoideum (Social amoeba).